Here is a 350-residue protein sequence, read N- to C-terminus: Protein XRP2 (350 aa).

Positions 1–10 (MGCFFSKRRK) are enriched in basic residues. Positions 1-31 (MGCFFSKRRKADKESRPENEEERPKQYSWDQ) are disordered. Glycine 2 carries the N-myristoyl glycine lipid modification. Cysteine 3 is lipidated: S-palmitoyl cysteine. The span at 11-31 (ADKESRPENEEERPKQYSWDQ) shows a compositional bias: basic and acidic residues. The C-CAP/cofactor C-like domain maps to 24–179 (PKQYSWDQRE…TWSNIHDFTP (156 aa)). Residues 98-99 (GS) and 115-118 (QQFR) each bind GTP.

This sequence belongs to the TBCC family. In terms of assembly, found in a complex with ARL3, RP2 and UNC119 (or UNC119B); RP2 induces hydrolysis of GTP ARL3 in the complex, leading to the release of UNC119 (or UNC119B). Interacts with ARL3; interaction is direct and stimulated with the activated GTP-bound form of ARL3. In terms of processing, myristoylated on Gly-2; which may be required for membrane targeting. Post-translationally, palmitoylated on Cys-3; which may be required for plasma membrane targeting. Mutation of Cys-3 targets the protein to internal membranes. As to expression, ubiquitous. Expressed in the rod and cone photoreceptors, extending from the tips of the outer segment (OS) through the inner segment (IS) and outer nuclear layer (ONL) and into the synaptic terminals of the outer plexiform layer (ONL). Also detected in the bipolar, horizontal and amacrine cells in the inner nuclear layer (INL), extending to the inner plexiform layer (IPL) and though the ganglion cell layer (GCL) and into the nerve fiber layer (NFL) (at protein level).

It localises to the cell membrane. It is found in the cell projection. Its subcellular location is the cilium. Acts as a GTPase-activating protein (GAP) involved in trafficking between the Golgi and the ciliary membrane. Involved in localization of proteins, such as NPHP3, to the cilium membrane by inducing hydrolysis of GTP ARL3, leading to the release of UNC119 (or UNC119B). Acts as a GTPase-activating protein (GAP) for tubulin in concert with tubulin-specific chaperone C, but does not enhance tubulin heterodimerization. Acts as a guanine nucleotide dissociation inhibitor towards ADP-ribosylation factor-like proteins. In Homo sapiens (Human), this protein is Protein XRP2 (RP2).